A 317-amino-acid polypeptide reads, in one-letter code: DNA-directed RNA polymerase subunit alpha (317 aa).

The interval 1–229 (MLNEFIYPDK…KHYELLENIF (229 aa)) is alpha N-terminal domain (alpha-NTD). An alpha C-terminal domain (alpha-CTD) region spans residues 245-317 (AEKLSLSIEE…ELGMNIETQR (73 aa)).

This sequence belongs to the RNA polymerase alpha chain family. As to quaternary structure, homodimer. The RNAP catalytic core consists of 2 alpha, 1 beta, 1 beta' and 1 omega subunit. When a sigma factor is associated with the core the holoenzyme is formed, which can initiate transcription.

It catalyses the reaction RNA(n) + a ribonucleoside 5'-triphosphate = RNA(n+1) + diphosphate. Its function is as follows. DNA-dependent RNA polymerase catalyzes the transcription of DNA into RNA using the four ribonucleoside triphosphates as substrates. The sequence is that of DNA-directed RNA polymerase subunit alpha from Aquifex aeolicus (strain VF5).